The sequence spans 373 residues: Type II secretion system protein L (373 aa).

Residues 1–214 (MTAWRDTLGR…RRSDPMQRWN (214 aa)) are Cytoplasmic-facing. A helical transmembrane segment spans residues 215 to 233 (LLLAVAALVLLAVAGWLLL). Topologically, residues 234-373 (DNRRQAADDL…AKEAADAAQR (140 aa)) are periplasmic.

It belongs to the GSP L family. In terms of assembly, type II secretion system is composed of four main components: the outer membrane complex, the inner membrane complex, the cytoplasmic secretion ATPase and the periplasm-spanning pseudopilus. Forms homodimers. Interacts with XpsM/GspM. Interacts with XpsE/GspE and XpsF/GspF.

Its subcellular location is the cell inner membrane. In terms of biological role, inner membrane component of the type II secretion system required for the energy-dependent secretion of extracellular factors such as proteases and toxins from the periplasm. Plays a role in the complex assembly and recruits XpsM resulting in a stable complex in the inner membrane. Provides thus a link between the energy-providing XpsE protein in the cytoplasm and the rest of the T2SS machinery. This Xanthomonas campestris pv. campestris (strain ATCC 33913 / DSM 3586 / NCPPB 528 / LMG 568 / P 25) protein is Type II secretion system protein L (pefL).